The following is a 459-amino-acid chain: Siroheme synthase (459 aa).

Residues 1 to 204 (MDHLPIFCQL…ADEKAVNATT (204 aa)) are precorrin-2 dehydrogenase /sirohydrochlorin ferrochelatase. NAD(+) contacts are provided by residues 22–23 (DV) and 43–44 (LT). Phosphoserine is present on serine 128. Positions 216–459 (GEVVLVGAGP…KLNWFSNYYD (244 aa)) are uroporphyrinogen-III C-methyltransferase. Proline 225 serves as a coordination point for S-adenosyl-L-methionine. The Proton acceptor role is filled by aspartate 248. Lysine 270 functions as the Proton donor in the catalytic mechanism. Residues 301 to 303 (GGD), isoleucine 306, 331 to 332 (TA), methionine 382, and glycine 411 contribute to the S-adenosyl-L-methionine site.

In the N-terminal section; belongs to the precorrin-2 dehydrogenase / sirohydrochlorin ferrochelatase family. This sequence in the C-terminal section; belongs to the precorrin methyltransferase family.

The catalysed reaction is uroporphyrinogen III + 2 S-adenosyl-L-methionine = precorrin-2 + 2 S-adenosyl-L-homocysteine + H(+). The enzyme catalyses precorrin-2 + NAD(+) = sirohydrochlorin + NADH + 2 H(+). It catalyses the reaction siroheme + 2 H(+) = sirohydrochlorin + Fe(2+). The protein operates within cofactor biosynthesis; adenosylcobalamin biosynthesis; precorrin-2 from uroporphyrinogen III: step 1/1. It participates in cofactor biosynthesis; adenosylcobalamin biosynthesis; sirohydrochlorin from precorrin-2: step 1/1. Its pathway is porphyrin-containing compound metabolism; siroheme biosynthesis; precorrin-2 from uroporphyrinogen III: step 1/1. It functions in the pathway porphyrin-containing compound metabolism; siroheme biosynthesis; siroheme from sirohydrochlorin: step 1/1. The protein operates within porphyrin-containing compound metabolism; siroheme biosynthesis; sirohydrochlorin from precorrin-2: step 1/1. Its function is as follows. Multifunctional enzyme that catalyzes the SAM-dependent methylations of uroporphyrinogen III at position C-2 and C-7 to form precorrin-2 via precorrin-1. Then it catalyzes the NAD-dependent ring dehydrogenation of precorrin-2 to yield sirohydrochlorin. Finally, it catalyzes the ferrochelation of sirohydrochlorin to yield siroheme. The sequence is that of Siroheme synthase from Salmonella agona (strain SL483).